We begin with the raw amino-acid sequence, 202 residues long: Putative scarecrow-like protein 16 (202 aa).

The VHIID stretch occupies residues 1–26; sequence MQIPTLIDSMANKLHKKPPPLLKLTV. The 202-residue stretch at 1 to 202 folds into the GRAS domain; the sequence is MQIPTLIDSM…RVERLEPKSR (202 aa). Residues 45 to 82 form a leucine repeat II (LRII) region; sequence ELGSKLVNFATTRNVAMEFRIISSSYSDGLSSLIEQLR. A PFYRE region spans residues 92–184; it reads LVVNCHMMLH…EADISWKIDN (93 aa). The interval 187-202 is SAW; it reads AKEGAERVERLEPKSR.

This sequence belongs to the GRAS family. In terms of tissue distribution, expressed in seedlings, leaves and flowers.

The protein resides in the nucleus. Its function is as follows. Probable transcription factor involved in plant development. The polypeptide is Putative scarecrow-like protein 16 (SCL16) (Arabidopsis thaliana (Mouse-ear cress)).